A 209-amino-acid polypeptide reads, in one-letter code: ATP-dependent Clp protease proteolytic subunit (209 aa).

Ser113 (nucleophile) is an active-site residue. Residue His138 is part of the active site.

This sequence belongs to the peptidase S14 family. Fourteen ClpP subunits assemble into 2 heptameric rings which stack back to back to give a disk-like structure with a central cavity, resembling the structure of eukaryotic proteasomes.

Its subcellular location is the cytoplasm. It catalyses the reaction Hydrolysis of proteins to small peptides in the presence of ATP and magnesium. alpha-casein is the usual test substrate. In the absence of ATP, only oligopeptides shorter than five residues are hydrolyzed (such as succinyl-Leu-Tyr-|-NHMec, and Leu-Tyr-Leu-|-Tyr-Trp, in which cleavage of the -Tyr-|-Leu- and -Tyr-|-Trp bonds also occurs).. Cleaves peptides in various proteins in a process that requires ATP hydrolysis. Has a chymotrypsin-like activity. Plays a major role in the degradation of misfolded proteins. In Blochmanniella floridana, this protein is ATP-dependent Clp protease proteolytic subunit.